Consider the following 138-residue polypeptide: Acidic phospholipase A2 MVL-PLA2 (138 aa).

Residues 1–16 (MRTLWIVAVCLMGVEG) form the signal peptide. Cystine bridges form between Cys42–Cys131, Cys44–Cys60, Cys59–Cys111, Cys65–Cys138, Cys66–Cys104, Cys73–Cys97, and Cys91–Cys102. Residues Tyr43, Gly45, and Gly47 each contribute to the Ca(2+) site. Residue His63 is part of the active site. Asp64 serves as a coordination point for Ca(2+). The May inhibit integrin function (Atypical cell attachment site) signature appears at 86-88 (NGD). Asp105 is a catalytic residue.

Belongs to the phospholipase A2 family. Group II subfamily. D49 sub-subfamily. Requires Ca(2+) as cofactor. In terms of tissue distribution, expressed by the venom gland.

The protein resides in the secreted. The catalysed reaction is a 1,2-diacyl-sn-glycero-3-phosphocholine + H2O = a 1-acyl-sn-glycero-3-phosphocholine + a fatty acid + H(+). Snake venom phospholipase A2 (PLA2) that displays an inhibitory effect, independent from its catalytic activity, on tumor cell adhesion and migration. This effect is mediated via specific inhibition of integrins alpha-5/beta-1 (ITGA5/ITGB1), alpha-v/beta-3 (ITGAV/ITGB3) and alpha-v/beta-6 (ITGAV/ITGB6). PLA2 catalyzes the calcium-dependent hydrolysis of the 2-acyl groups in 3-sn-phosphoglycerides. The chain is Acidic phospholipase A2 MVL-PLA2 from Macrovipera lebetina transmediterranea (Blunt-nosed viper).